The following is a 280-amino-acid chain: DNA repair protein RecO (280 aa).

Residues 261 to 280 form a disordered region; that stretch reads DMAHGNHTGQEDLPATASGA.

It belongs to the RecO family.

In terms of biological role, involved in DNA repair and RecF pathway recombination. This is DNA repair protein RecO from Mycolicibacterium smegmatis (strain ATCC 700084 / mc(2)155) (Mycobacterium smegmatis).